The sequence spans 202 residues: Peptide methionine sulfoxide reductase B1, chloroplastic (202 aa).

The transit peptide at methionine 1–glutamine 63 directs the protein to the chloroplast. The interval tyrosine 48–lysine 67 is disordered. Positions glutamate 75 to leucine 197 constitute a MsrB domain. The Zn(2+) site is built by cysteine 114, cysteine 117, cysteine 163, and cysteine 166. Cysteine 186 serves as the catalytic Nucleophile.

Belongs to the MsrB Met sulfoxide reductase family. Requires Zn(2+) as cofactor. Expressed at low levels in stems, leaves, floral buds, flowers and siliques (at protein level).

Its subcellular location is the plastid. The protein resides in the chloroplast. It catalyses the reaction L-methionyl-[protein] + [thioredoxin]-disulfide + H2O = L-methionyl-(R)-S-oxide-[protein] + [thioredoxin]-dithiol. In terms of biological role, catalyzes the reduction of methionine sulfoxide (MetSO) to methionine in proteins. Specifically reduces the MetSO R-enantiomer. Plays a protective role against oxidative stress by restoring activity to proteins that have been inactivated by methionine oxidation. May play an essential function in association with MSRB2 in maintaining vegetative growth during environmental constraints, through the preservation of photosynthetic antennae. MSRB1 and MSRB2 account for most of the leaf peptide MSR capacity. In Arabidopsis thaliana (Mouse-ear cress), this protein is Peptide methionine sulfoxide reductase B1, chloroplastic.